The primary structure comprises 931 residues: Protein phosphatase 1 regulatory subunit 37 homolog (931 aa).

The segment at Thr-20–Ala-71 is disordered. Residues Pro-41 to Ser-51 show a composition bias toward polar residues. 8 LRR repeats span residues Ala-232–Ala-259, Ser-262–Cys-285, Asn-290–Leu-314, Leu-323–Arg-346, Lys-351–Glu-374, Asn-379–Asn-407, His-409–Glu-430, and Asn-435–Ser-458. Residues Gln-519–Ala-533 are compositionally biased toward basic and acidic residues. Disordered regions lie at residues Gln-519 to Arg-602 and Pro-780 to Arg-807. The span at Asp-534–Thr-547 shows a compositional bias: acidic residues. Residues Ser-554–Ser-563 are compositionally biased toward low complexity. Basic and acidic residues-rich tracts occupy residues Pro-564–Pro-584 and Thr-790–Arg-807.

The protein belongs to the PPP1R37 family.

This is Protein phosphatase 1 regulatory subunit 37 homolog from Caenorhabditis briggsae.